Consider the following 310-residue polypeptide: MVAVVRTQDLLDNFNLTLVSGEDGIQREIITSDISRPGIEMTGYFRYYPKERLQLIGKTEMAYFLDLSSEQRRDRAERLCTDITPGIVVSRGMDIPEELKEASEKSGVPILQSPRKTTRVISRLTNYLESKFAPFTAIHGVLVDIYGVGVLIIGQSGVGKSETALELVKRGHRLVADDNVEIRQEDYDSLIGNAPPLIEHLLEIRGLGIINVMTLFGAGSVRSKKRISLVINLENWDEKKQYDRLGLDEDMMKVMDVHLPKATVPVRPGRNLAVIIEVAAMNFRLKRMGVNTAEEFSERLSTMIEKGELE.

Residues His-139 and Lys-160 contribute to the active site. Residue 154–161 coordinates ATP; that stretch reads GQSGVGKS. Ser-161 lines the Mg(2+) pocket. Catalysis depends on Asp-178, which acts as the Proton acceptor; for phosphorylation activity. Proton donor; for dephosphorylation activity. The important for the catalytic mechanism of both phosphorylation and dephosphorylation stretch occupies residues 202–211; the sequence is LEIRGLGIIN. Residue Glu-203 participates in Mg(2+) binding. Arg-244 is an active-site residue. The segment at 265–270 is important for the catalytic mechanism of dephosphorylation; the sequence is PVRPGR.

This sequence belongs to the HPrK/P family. Homohexamer. Requires Mg(2+) as cofactor.

The enzyme catalyses [HPr protein]-L-serine + ATP = [HPr protein]-O-phospho-L-serine + ADP + H(+). It carries out the reaction [HPr protein]-O-phospho-L-serine + phosphate + H(+) = [HPr protein]-L-serine + diphosphate. Catalyzes the ATP- as well as the pyrophosphate-dependent phosphorylation of a specific serine residue in HPr, a phosphocarrier protein of the phosphoenolpyruvate-dependent sugar phosphotransferase system (PTS). HprK/P also catalyzes the pyrophosphate-producing, inorganic phosphate-dependent dephosphorylation (phosphorolysis) of seryl-phosphorylated HPr (P-Ser-HPr). The two antagonistic activities of HprK/P are regulated by several intracellular metabolites, which change their concentration in response to the absence or presence of rapidly metabolisable carbon sources (glucose, fructose, etc.) in the growth medium. Also phosphorylates/dephosphorylates the HPr-like catabolite repression protein crh on a specific serine residue. Therefore, by controlling the phosphorylation state of HPr and crh, HPrK/P is a sensor enzyme that plays a major role in the regulation of carbon metabolism and sugar transport: it mediates carbon catabolite repression (CCR), and regulates PTS-catalyzed carbohydrate uptake and inducer exclusion. This Oceanobacillus iheyensis (strain DSM 14371 / CIP 107618 / JCM 11309 / KCTC 3954 / HTE831) protein is HPr kinase/phosphorylase 1 (hprK1).